A 354-amino-acid chain; its full sequence is S-adenosylmethionine:tRNA ribosyltransferase-isomerase (354 aa).

Belongs to the QueA family. As to quaternary structure, monomer.

The protein resides in the cytoplasm. It catalyses the reaction 7-aminomethyl-7-carbaguanosine(34) in tRNA + S-adenosyl-L-methionine = epoxyqueuosine(34) in tRNA + adenine + L-methionine + 2 H(+). Its pathway is tRNA modification; tRNA-queuosine biosynthesis. In terms of biological role, transfers and isomerizes the ribose moiety from AdoMet to the 7-aminomethyl group of 7-deazaguanine (preQ1-tRNA) to give epoxyqueuosine (oQ-tRNA). This is S-adenosylmethionine:tRNA ribosyltransferase-isomerase from Salmonella schwarzengrund (strain CVM19633).